A 75-amino-acid chain; its full sequence is Small ribosomal subunit protein bS16 (75 aa).

The protein belongs to the bacterial ribosomal protein bS16 family.

This chain is Small ribosomal subunit protein bS16, found in Campylobacter jejuni subsp. jejuni serotype O:23/36 (strain 81-176).